We begin with the raw amino-acid sequence, 137 residues long: Holo-[acyl-carrier-protein] synthase (137 aa).

The Mg(2+) site is built by Asp8 and Glu58.

It belongs to the P-Pant transferase superfamily. AcpS family. The cofactor is Mg(2+).

It is found in the cytoplasm. The catalysed reaction is apo-[ACP] + CoA = holo-[ACP] + adenosine 3',5'-bisphosphate + H(+). In terms of biological role, transfers the 4'-phosphopantetheine moiety from coenzyme A to a Ser of acyl-carrier-protein. The polypeptide is Holo-[acyl-carrier-protein] synthase (Lactobacillus delbrueckii subsp. bulgaricus (strain ATCC 11842 / DSM 20081 / BCRC 10696 / JCM 1002 / NBRC 13953 / NCIMB 11778 / NCTC 12712 / WDCM 00102 / Lb 14)).